The chain runs to 473 residues: UDP-N-acetylmuramate--L-alanine ligase (473 aa).

112 to 118 provides a ligand contact to ATP; sequence GTHGKTT.

This sequence belongs to the MurCDEF family.

Its subcellular location is the cytoplasm. It carries out the reaction UDP-N-acetyl-alpha-D-muramate + L-alanine + ATP = UDP-N-acetyl-alpha-D-muramoyl-L-alanine + ADP + phosphate + H(+). It functions in the pathway cell wall biogenesis; peptidoglycan biosynthesis. Functionally, cell wall formation. The polypeptide is UDP-N-acetylmuramate--L-alanine ligase (Nitrosomonas eutropha (strain DSM 101675 / C91 / Nm57)).